A 387-amino-acid polypeptide reads, in one-letter code: Exodeoxyribonuclease 7 large subunit (387 aa).

Belongs to the XseA family. Heterooligomer composed of large and small subunits.

It localises to the cytoplasm. The enzyme catalyses Exonucleolytic cleavage in either 5'- to 3'- or 3'- to 5'-direction to yield nucleoside 5'-phosphates.. Its function is as follows. Bidirectionally degrades single-stranded DNA into large acid-insoluble oligonucleotides, which are then degraded further into small acid-soluble oligonucleotides. This chain is Exodeoxyribonuclease 7 large subunit, found in Parasynechococcus marenigrum (strain WH8102).